The chain runs to 476 residues: Aspartyl/glutamyl-tRNA(Asn/Gln) amidotransferase subunit B (476 aa).

The protein belongs to the GatB/GatE family. GatB subfamily. As to quaternary structure, heterotrimer of A, B and C subunits.

It carries out the reaction L-glutamyl-tRNA(Gln) + L-glutamine + ATP + H2O = L-glutaminyl-tRNA(Gln) + L-glutamate + ADP + phosphate + H(+). It catalyses the reaction L-aspartyl-tRNA(Asn) + L-glutamine + ATP + H2O = L-asparaginyl-tRNA(Asn) + L-glutamate + ADP + phosphate + 2 H(+). In terms of biological role, allows the formation of correctly charged Asn-tRNA(Asn) or Gln-tRNA(Gln) through the transamidation of misacylated Asp-tRNA(Asn) or Glu-tRNA(Gln) in organisms which lack either or both of asparaginyl-tRNA or glutaminyl-tRNA synthetases. The reaction takes place in the presence of glutamine and ATP through an activated phospho-Asp-tRNA(Asn) or phospho-Glu-tRNA(Gln). This Oceanobacillus iheyensis (strain DSM 14371 / CIP 107618 / JCM 11309 / KCTC 3954 / HTE831) protein is Aspartyl/glutamyl-tRNA(Asn/Gln) amidotransferase subunit B.